Consider the following 102-residue polypeptide: Monothiol glutaredoxin-S10 (102 aa).

A Glutaredoxin domain is found at 1 to 101; sequence MDVVARLASQ…ILLKEAGALW (101 aa). A [2Fe-2S] cluster-binding site is contributed by Cys-21. The Responsive for interaction with TGA factors signature appears at 99 to 102; sequence ALWL.

It belongs to the glutaredoxin family. CC-type subfamily.

The protein localises to the cytoplasm. It is found in the nucleus. Functionally, may only reduce GSH-thiol disulfides, but not protein disulfides. The protein is Monothiol glutaredoxin-S10 (GRXS10) of Arabidopsis thaliana (Mouse-ear cress).